We begin with the raw amino-acid sequence, 494 residues long: MTSLVPGAGLLPIPTSSPLTAVSSLGVSLSSLGAIPAAALDPNITTLGEIPQPPLMGNVDPSKIDEIRRTVYVGNLNSQTTTADQLLEFFKQVGEVKFVRMAGDETQPTRFAFVEFADQNSVPRALAFNGVMFGDRPLKINHSNNAIVKPPEMTPQAAAKELEEVMKRVREAQSFISAAIEPESGKSNERKGGRSRSHTRSKSRSSSKSHSRRKRSQSKHRSRSHNRSRSRQKDRRRSKSPHKKRSKSRERRKSRSRSRSRDKRKDTREKVKERVKEKEREKEREREKDREKDKERGKNKDKDREKEKDHEKERDKEKEKEQDKDKEREKDRSKETDEKRKKEKKSRTPPRSYNASRRSRSTSRERRRRRSRSSSRSPRTSKTVKRKSSRSPSPRGRNKKEKKREKERDHISDRRERERSTSTKKSSGDRDGKEKVEKSTTPVKEKEHSKESDATVSKAADEKGSPRTEDEGKVQHNGNCQPNEESPCSKADAV.

In terms of domain architecture, RRM spans 69 to 145 (RTVYVGNLNS…RPLKINHSNN (77 aa)). 2 positions are modified to phosphoserine: serine 174 and serine 187. A disordered region spans residues 176–494 (ISAAIEPESG…ESPCSKADAV (319 aa)). Residues 183–192 (ESGKSNERKG) show a composition bias toward basic and acidic residues. A compositionally biased stretch (basic residues) spans 193-262 (GRSRSHTRSK…KSRSRSRSRD (70 aa)). Over residues 263 to 340 (KRKDTREKVK…DRSKETDEKR (78 aa)) the composition is skewed to basic and acidic residues. Threonine 348 carries the post-translational modification Phosphothreonine. Residues 357-373 (RRSRSTSRERRRRRSRS) show a composition bias toward basic residues. The span at 404–474 (REKERDHISD…SPRTEDEGKV (71 aa)) shows a compositional bias: basic and acidic residues. Over residues 476 to 486 (HNGNCQPNEES) the composition is skewed to polar residues. A Glycyl lysine isopeptide (Lys-Gly) (interchain with G-Cter in SUMO2) cross-link involves residue lysine 490.

Belongs to the splicing factor SR family. As to quaternary structure, homodimer. Binds SFRS1, SFRS2, SFRS3 and SFRS6. Interacts with the spliceosome. Interacts with SREK1IP1.

Its subcellular location is the nucleus. Its function is as follows. Participates in the regulation of alternative splicing by modulating the activity of other splice facors. Inhibits the splicing activity of SFRS1, SFRS2 and SFRS6. Augments the splicing activity of SFRS3. In Mus musculus (Mouse), this protein is Splicing regulatory glutamine/lysine-rich protein 1 (Srek1).